We begin with the raw amino-acid sequence, 351 residues long: Methylthioribose-1-phosphate isomerase (351 aa).

Residues 51-53 (RGA), arginine 94, and glutamine 199 each bind substrate. Aspartate 240 (proton donor) is an active-site residue. Residue 250-251 (NK) participates in substrate binding.

It belongs to the eIF-2B alpha/beta/delta subunits family. MtnA subfamily. As to quaternary structure, homodimer.

The enzyme catalyses 5-(methylsulfanyl)-alpha-D-ribose 1-phosphate = 5-(methylsulfanyl)-D-ribulose 1-phosphate. It functions in the pathway amino-acid biosynthesis; L-methionine biosynthesis via salvage pathway; L-methionine from S-methyl-5-thio-alpha-D-ribose 1-phosphate: step 1/6. Catalyzes the interconversion of methylthioribose-1-phosphate (MTR-1-P) into methylthioribulose-1-phosphate (MTRu-1-P). This Bacillus cereus (strain ATCC 10987 / NRS 248) protein is Methylthioribose-1-phosphate isomerase.